A 201-amino-acid chain; its full sequence is Dephospho-CoA kinase (201 aa).

The DPCK domain maps to 2–201 (MIGLTGGIAS…KRWKVIPEDQ (200 aa)). 10–15 (ASGKSS) provides a ligand contact to ATP.

The protein belongs to the CoaE family.

It localises to the cytoplasm. It carries out the reaction 3'-dephospho-CoA + ATP = ADP + CoA + H(+). Its pathway is cofactor biosynthesis; coenzyme A biosynthesis; CoA from (R)-pantothenate: step 5/5. In terms of biological role, catalyzes the phosphorylation of the 3'-hydroxyl group of dephosphocoenzyme A to form coenzyme A. The polypeptide is Dephospho-CoA kinase (Halalkalibacterium halodurans (strain ATCC BAA-125 / DSM 18197 / FERM 7344 / JCM 9153 / C-125) (Bacillus halodurans)).